Reading from the N-terminus, the 156-residue chain is Small ribosomal subunit protein uS7 (156 aa).

This sequence belongs to the universal ribosomal protein uS7 family. As to quaternary structure, part of the 30S ribosomal subunit. Contacts proteins S9 and S11.

Its function is as follows. One of the primary rRNA binding proteins, it binds directly to 16S rRNA where it nucleates assembly of the head domain of the 30S subunit. Is located at the subunit interface close to the decoding center, probably blocks exit of the E-site tRNA. The polypeptide is Small ribosomal subunit protein uS7 (Halalkalibacterium halodurans (strain ATCC BAA-125 / DSM 18197 / FERM 7344 / JCM 9153 / C-125) (Bacillus halodurans)).